We begin with the raw amino-acid sequence, 344 residues long: tRNA N6-adenosine threonylcarbamoyltransferase (344 aa).

Fe cation-binding residues include histidine 119 and histidine 123. Substrate-binding positions include 141–145, aspartate 174, glycine 187, aspartate 191, and asparagine 280; that span reads VVSGG. Aspartate 310 contributes to the Fe cation binding site.

The protein belongs to the KAE1 / TsaD family. Fe(2+) is required as a cofactor.

Its subcellular location is the cytoplasm. The catalysed reaction is L-threonylcarbamoyladenylate + adenosine(37) in tRNA = N(6)-L-threonylcarbamoyladenosine(37) in tRNA + AMP + H(+). In terms of biological role, required for the formation of a threonylcarbamoyl group on adenosine at position 37 (t(6)A37) in tRNAs that read codons beginning with adenine. Is involved in the transfer of the threonylcarbamoyl moiety of threonylcarbamoyl-AMP (TC-AMP) to the N6 group of A37, together with TsaE and TsaB. TsaD likely plays a direct catalytic role in this reaction. This chain is tRNA N6-adenosine threonylcarbamoyltransferase, found in Listeria monocytogenes serotype 4b (strain CLIP80459).